Reading from the N-terminus, the 509-residue chain is Histidine ammonia-lyase (509 aa).

A cross-link (5-imidazolinone (Ala-Gly)) is located at residues 142 to 144; sequence ASG. Serine 143 bears the 2,3-didehydroalanine (Ser) mark.

The protein belongs to the PAL/histidase family. In terms of processing, contains an active site 4-methylidene-imidazol-5-one (MIO), which is formed autocatalytically by cyclization and dehydration of residues Ala-Ser-Gly.

It is found in the cytoplasm. It catalyses the reaction L-histidine = trans-urocanate + NH4(+). It participates in amino-acid degradation; L-histidine degradation into L-glutamate; N-formimidoyl-L-glutamate from L-histidine: step 1/3. The chain is Histidine ammonia-lyase from Pseudomonas aeruginosa (strain UCBPP-PA14).